A 413-amino-acid chain; its full sequence is Serine hydroxymethyltransferase (413 aa).

(6S)-5,6,7,8-tetrahydrofolate-binding positions include Leu-119 and Gly-123 to Leu-125. Lys-228 carries the N6-(pyridoxal phosphate)lysine modification. Ser-351 to Phe-353 contributes to the (6S)-5,6,7,8-tetrahydrofolate binding site.

It belongs to the SHMT family. In terms of assembly, homodimer. It depends on pyridoxal 5'-phosphate as a cofactor.

It is found in the cytoplasm. The enzyme catalyses (6R)-5,10-methylene-5,6,7,8-tetrahydrofolate + glycine + H2O = (6S)-5,6,7,8-tetrahydrofolate + L-serine. It participates in one-carbon metabolism; tetrahydrofolate interconversion. The protein operates within amino-acid biosynthesis; glycine biosynthesis; glycine from L-serine: step 1/1. Functionally, catalyzes the reversible interconversion of serine and glycine with tetrahydrofolate (THF) serving as the one-carbon carrier. This reaction serves as the major source of one-carbon groups required for the biosynthesis of purines, thymidylate, methionine, and other important biomolecules. Also exhibits THF-independent aldolase activity toward beta-hydroxyamino acids, producing glycine and aldehydes, via a retro-aldol mechanism. This chain is Serine hydroxymethyltransferase, found in Clostridium botulinum (strain ATCC 19397 / Type A).